The primary structure comprises 148 residues: Endoribonuclease YbeY (148 aa).

Zn(2+) contacts are provided by histidine 113, histidine 117, and histidine 123.

Belongs to the endoribonuclease YbeY family. The cofactor is Zn(2+).

It localises to the cytoplasm. Functionally, single strand-specific metallo-endoribonuclease involved in late-stage 70S ribosome quality control and in maturation of the 3' terminus of the 16S rRNA. The protein is Endoribonuclease YbeY of Borrelia turicatae (strain 91E135).